Here is a 396-residue protein sequence, read N- to C-terminus: 1-deoxy-D-xylulose 5-phosphate reductoisomerase (396 aa).

Threonine 15, glycine 16, serine 17, isoleucine 18, glycine 41, and asparagine 129 together coordinate NADPH. Lysine 130 serves as a coordination point for 1-deoxy-D-xylulose 5-phosphate. Glutamate 131 contributes to the NADPH binding site. Aspartate 155 serves as a coordination point for Mn(2+). 1-deoxy-D-xylulose 5-phosphate-binding residues include serine 156, glutamate 157, serine 182, and histidine 205. Glutamate 157 is a Mn(2+) binding site. Residue glycine 211 participates in NADPH binding. 1-deoxy-D-xylulose 5-phosphate-binding residues include serine 218, asparagine 223, lysine 224, and glutamate 227. Glutamate 227 provides a ligand contact to Mn(2+).

Belongs to the DXR family. It depends on Mg(2+) as a cofactor. Mn(2+) serves as cofactor.

It carries out the reaction 2-C-methyl-D-erythritol 4-phosphate + NADP(+) = 1-deoxy-D-xylulose 5-phosphate + NADPH + H(+). It functions in the pathway isoprenoid biosynthesis; isopentenyl diphosphate biosynthesis via DXP pathway; isopentenyl diphosphate from 1-deoxy-D-xylulose 5-phosphate: step 1/6. In terms of biological role, catalyzes the NADPH-dependent rearrangement and reduction of 1-deoxy-D-xylulose-5-phosphate (DXP) to 2-C-methyl-D-erythritol 4-phosphate (MEP). The sequence is that of 1-deoxy-D-xylulose 5-phosphate reductoisomerase from Xanthomonas axonopodis pv. citri (strain 306).